Consider the following 437-residue polypeptide: Perilipin-2 (437 aa).

Position 2 is an N-acetylalanine (A2). S215 is modified (phosphoserine). At Y232 the chain carries Phosphotyrosine. Residues 412 to 437 (SQNAQDQGAEMDKSSQETQRSEHKTH) are disordered. The span at 421–437 (EMDKSSQETQRSEHKTH) shows a compositional bias: basic and acidic residues.

This sequence belongs to the perilipin family. As to quaternary structure, interacts with IRGC. Acylated; primarily with C14, C16 and C18 fatty acids. Post-translationally, phosphorylation at Tyr-232 by isoform 1 of CHKA (CHKalpha2) promotes dissociation from lipid droplets: dissociation is followed by recruitment of autophagosome machinery to lipid droplets and subsequent lipid droplet lipolysis. In terms of processing, polyubiquitination of Nt-acetylatable A-PLIN2 by MARCHF6 lead to degradation by 26S proteasomes. Milk lipid globules.

It localises to the membrane. Its subcellular location is the lipid droplet. Functionally, structural component of lipid droplets, which is required for the formation and maintenance of lipid storage droplets. The sequence is that of Perilipin-2 from Homo sapiens (Human).